Here is a 548-residue protein sequence, read N- to C-terminus: Biotin-dependent acetyl-/propionyl-coenzyme A carboxylase beta5 subunit (548 aa).

Residues 1-23 (MTSVTDRSAHSAERSTEHTIDIH) are disordered. The span at 7-21 (RSAHSAERSTEHTID) shows a compositional bias: basic and acidic residues. The region spanning 25–281 (TAGKLAELHK…NNSTDAPRYQ (257 aa)) is the CoA carboxyltransferase N-terminal domain. The 247-residue stretch at 295-541 (DEDLELDTLI…ERKIAQLPPK (247 aa)) folds into the CoA carboxyltransferase C-terminal domain.

This sequence belongs to the AccD/PCCB family. As to quaternary structure, forms homohexamers. The biotin-dependent acyl-CoA carboxylase complex is composed of AccA3, which contains the biotin carboxylase (BC) and biotin carboxyl carrier protein (BCCP) domains, and AccD5, which contains the carboxyl transferase (CT) domain. The AccA3/AccD5 complex forms a dodecamer, and can associate with the epsilon subunit AccE5 (Rv3280), which stimulates carboxylation by the complex. Is also part of the long-chain acyl-CoA carboxylase (LCC) complex, which is composed of AccA3, AccD4, AccD5 and AccE5. The four subunits are essential for activity, but AccD5, together with AccE5, probably plays a structural role rather than a catalytic one.

The catalysed reaction is N(6)-carboxybiotinyl-L-lysyl-[protein] + acetyl-CoA = N(6)-biotinyl-L-lysyl-[protein] + malonyl-CoA. It carries out the reaction N(6)-carboxybiotinyl-L-lysyl-[protein] + propanoyl-CoA = methylmalonyl-CoA + N(6)-biotinyl-L-lysyl-[protein]. It participates in lipid metabolism; mycolic acid biosynthesis. Its activity is regulated as follows. Carboxylase activity of the AccA3/AccD5 complex is stimulated by interaction with AccE5. Component of a biotin-dependent acyl-CoA carboxylase complex. This subunit transfers the CO2 from carboxybiotin to the CoA ester substrate. When associated with the alpha3 subunit AccA3, is involved in the carboxylation of acetyl-CoA and propionyl-CoA, with a preference for propionyl-CoA. Is also required for the activity of the long-chain acyl-CoA carboxylase (LCC) complex. This Mycobacterium tuberculosis (strain ATCC 25618 / H37Rv) protein is Biotin-dependent acetyl-/propionyl-coenzyme A carboxylase beta5 subunit.